A 200-amino-acid polypeptide reads, in one-letter code: COMM domain-containing protein 7 (200 aa).

Positions 133-200 (QLIDMEWKFG…RVRTSMECFC (68 aa)) constitute a COMM domain.

The protein belongs to the COMM domain-containing protein 7 family. In terms of assembly, component of the commander complex consisting of the CCC subcomplex and the retriever subcomplex. Component of the CCC (COMMD/CCDC22/CCDC93) subcomplex consisting of COMMD1, COMMD2, COMMD3, COMMD4, COMMD5, COMMD6, COMMD7, COMMD8, COMMD9, COMMD10, CCDC22 and CCDC93; within the complex forms a heterodimer with COMMD9. Interacts with RELA. Interacts with CCDC22, CCDC93, SCNN1B, CUL7. In terms of tissue distribution, widely expressed with highest expression in lung.

It localises to the cytoplasmic vesicle. Its function is as follows. Scaffold protein in the commander complex that is essential for endosomal recycling of transmembrane cargos; the commander complex is composed of the CCC subcomplex and the retriever subcomplex. May modulate activity of cullin-RING E3 ubiquitin ligase (CRL) complexes. Associates with the NF-kappa-B complex and suppresses its transcriptional activity. The chain is COMM domain-containing protein 7 (COMMD7) from Homo sapiens (Human).